Here is a 286-residue protein sequence, read N- to C-terminus: uncharacterized protein (286 aa).

6 consecutive transmembrane segments (helical) span residues 52-74 (ILWT…LIGL), 79-101 (LIAI…FLFL), 142-161 (WWDP…VSFF), 168-190 (VLVF…GAIL), 203-225 (IQAT…VALV), and 257-276 (IIWI…ASFM).

The protein resides in the cell membrane. This is an uncharacterized protein from Archaeoglobus fulgidus (strain ATCC 49558 / DSM 4304 / JCM 9628 / NBRC 100126 / VC-16).